The following is a 211-amino-acid chain: MSLSDIQQAILSLITNNINADGVSPSQTEIARAFGFKGVRAVQHHLDVLEQQGMIRRIPGQARGIRLKHLTEVDEVALALQSKDVLRLPVLGRVAAGQPIGADIGEDHVVLLDRVFFSPAPDYLLRVQGDSMRDEGIFDGDLIGVHRTQDAHSGQIVVARIDDEITVKLLKISKDRIRLLPRNPDFAPIEVRSDQDFAIEGLYCGLLRPNR.

A DNA-binding region (H-T-H motif) is located at residues 27–47 (QTEIARAFGFKGVRAVQHHLD). Active-site for autocatalytic cleavage activity residues include serine 131 and lysine 168.

This sequence belongs to the peptidase S24 family. Homodimer.

It catalyses the reaction Hydrolysis of Ala-|-Gly bond in repressor LexA.. Functionally, represses a number of genes involved in the response to DNA damage (SOS response), including recA and lexA. In the presence of single-stranded DNA, RecA interacts with LexA causing an autocatalytic cleavage which disrupts the DNA-binding part of LexA, leading to derepression of the SOS regulon and eventually DNA repair. This chain is LexA repressor, found in Xylella fastidiosa (strain M23).